The primary structure comprises 334 residues: Aspartate carbamoyltransferase catalytic subunit (334 aa).

Residues R71 and T72 each coordinate carbamoyl phosphate. K99 contributes to the L-aspartate binding site. Carbamoyl phosphate contacts are provided by R121, H151, and Q154. L-aspartate-binding residues include R184 and R239. Carbamoyl phosphate contacts are provided by G280 and P281.

This sequence belongs to the aspartate/ornithine carbamoyltransferase superfamily. ATCase family. As to quaternary structure, heterododecamer (2C3:3R2) of six catalytic PyrB chains organized as two trimers (C3), and six regulatory PyrI chains organized as three dimers (R2).

The enzyme catalyses carbamoyl phosphate + L-aspartate = N-carbamoyl-L-aspartate + phosphate + H(+). The protein operates within pyrimidine metabolism; UMP biosynthesis via de novo pathway; (S)-dihydroorotate from bicarbonate: step 2/3. Its function is as follows. Catalyzes the condensation of carbamoyl phosphate and aspartate to form carbamoyl aspartate and inorganic phosphate, the committed step in the de novo pyrimidine nucleotide biosynthesis pathway. In Pseudomonas fluorescens (strain ATCC BAA-477 / NRRL B-23932 / Pf-5), this protein is Aspartate carbamoyltransferase catalytic subunit.